A 491-amino-acid chain; its full sequence is UDP-N-acetylmuramate--L-alanine ligase (491 aa).

126–132 provides a ligand contact to ATP; that stretch reads GTHGKTT.

The protein belongs to the MurCDEF family.

Its subcellular location is the cytoplasm. The enzyme catalyses UDP-N-acetyl-alpha-D-muramate + L-alanine + ATP = UDP-N-acetyl-alpha-D-muramoyl-L-alanine + ADP + phosphate + H(+). Its pathway is cell wall biogenesis; peptidoglycan biosynthesis. Functionally, cell wall formation. This Shigella flexneri serotype 5b (strain 8401) protein is UDP-N-acetylmuramate--L-alanine ligase.